Reading from the N-terminus, the 126-residue chain is Aspartate 1-decarboxylase (126 aa).

Ser-25 functions as the Schiff-base intermediate with substrate; via pyruvic acid in the catalytic mechanism. Ser-25 carries the post-translational modification Pyruvic acid (Ser). Thr-57 serves as a coordination point for substrate. The active-site Proton donor is the Tyr-58. A substrate-binding site is contributed by 73–75 (GGA).

The protein belongs to the PanD family. Heterooctamer of four alpha and four beta subunits. Pyruvate is required as a cofactor. Post-translationally, is synthesized initially as an inactive proenzyme, which is activated by self-cleavage at a specific serine bond to produce a beta-subunit with a hydroxyl group at its C-terminus and an alpha-subunit with a pyruvoyl group at its N-terminus.

The protein resides in the cytoplasm. It catalyses the reaction L-aspartate + H(+) = beta-alanine + CO2. Its pathway is cofactor biosynthesis; (R)-pantothenate biosynthesis; beta-alanine from L-aspartate: step 1/1. Its function is as follows. Catalyzes the pyruvoyl-dependent decarboxylation of aspartate to produce beta-alanine. This is Aspartate 1-decarboxylase from Xanthomonas oryzae pv. oryzae (strain MAFF 311018).